The primary structure comprises 277 residues: Undecaprenyl-diphosphatase (277 aa).

6 consecutive transmembrane segments (helical) span residues 53 to 73 (LGAI…VILG), 85 to 105 (VNLL…ADLI), 108 to 128 (WLFN…VMLW), 183 to 203 (AATE…AAYS), 215 to 235 (GDLP…MLAV), and 250 to 270 (FAWY…LGVV).

The protein belongs to the UppP family.

It is found in the cell inner membrane. The enzyme catalyses di-trans,octa-cis-undecaprenyl diphosphate + H2O = di-trans,octa-cis-undecaprenyl phosphate + phosphate + H(+). Catalyzes the dephosphorylation of undecaprenyl diphosphate (UPP). Confers resistance to bacitracin. This is Undecaprenyl-diphosphatase from Azotobacter vinelandii (strain DJ / ATCC BAA-1303).